Reading from the N-terminus, the 204-residue chain is Protein XpaC (204 aa).

In double copy it causes aberrant cell morphology, filamentation and inhibits sporulation. Hydrolyzes 5-bromo-4-chloroindolyl phosphate. The protein is Protein XpaC (xpaC) of Bacillus subtilis (strain 168).